Consider the following 501-residue polypeptide: MSFPQLGYQYIRPLYPSERPGAAGGSGGSAGARGGLGAGASELNASGSLSNVLSSVYGAPYAAAAAAAAAQGYGAFLPYAAELPIFPQLGAQYELKDSPGVQHPAAAAAFPHPHPAFYPYGQYQFGDPSRPKNATRESTSTLKAWLNEHRKNPYPTKGEKIMLAIITKMTLTQVSTWFANARRRLKKENKMTWAPRSRTDEEGNAYGSEREEEDEEEDEEDGKRELELEEEELGGEEEDTGGEGLADDDEDEEIDLENLDGAATEPELSLAGAARRDGDLGLGPISDSKNSDSEDSSEGLEDRPLPVLSLAPAPPPVAVASPSLPSPPVSLDPCAPAPAPASALQKPKIWSLAETATSPDNPRRSPPGAGGSPPGAAVAPSALQLSPAAAAAAAHRLVSAPLGKFPAWTNRPFPGPPPGPRLHPLSLLGSAPPHLLGLPGAAGHPAAAAAFARPAEPEGGTDRCSALEVEKKLLKTAFQPVPRRPQNHLDAALVLSALSSS.

The segment at residues 125–188 (FGDPSRPKNA…ANARRRLKKE (64 aa)) is a DNA-binding region (homeobox; TALE-type). The segment at 190–381 (KMTWAPRSRT…SPPGAAVAPS (192 aa)) is disordered. 2 stretches are compositionally biased toward acidic residues: residues 210–220 (REEEDEEEDEE) and 227–258 (ELEE…DLEN). Phosphoserine is present on residues S323 and S326. Residues 324-339 (LPSPPVSLDPCAPAPA) show a composition bias toward pro residues.

The protein belongs to the TALE/IRO homeobox family.

It is found in the nucleus. Functionally, transcription factor involved in SHH-dependent neural patterning. Together with NKX2-2 and NKX6-1 acts to restrict the generation of motor neurons to the appropriate region of the neural tube. Belongs to the class I proteins of neuronal progenitor factors, which are repressed by SHH signals. Involved in the transcriptional repression of MNX1 in non-motor neuron cells. Acts as a regulator of energy metabolism. In Homo sapiens (Human), this protein is Iroquois-class homeodomain protein IRX-3 (IRX3).